A 190-amino-acid chain; its full sequence is FMN reductase (NADH) RutF (190 aa).

It belongs to the non-flavoprotein flavin reductase family. RutF subfamily.

It carries out the reaction FMNH2 + NAD(+) = FMN + NADH + 2 H(+). In terms of biological role, catalyzes the reduction of FMN to FMNH2 which is used to reduce pyrimidine by RutA via the Rut pathway. The protein is FMN reductase (NADH) RutF of Pantoea ananatis (strain LMG 20103).